Reading from the N-terminus, the 385-residue chain is Digeranylgeranylglycerophospholipid reductase 2 (385 aa).

FAD-binding residues include Ala13, Glu32, Cys43, Ala44, Gly46, Arg95, Ala119, Asp273, Gly285, and Ile286.

The protein belongs to the geranylgeranyl reductase family. DGGGPL reductase subfamily. FAD serves as cofactor.

The catalysed reaction is a 2,3-bis-O-phytanyl-sn-glycerol 1-phospholipid + 8 A = a 2,3-bis-O-(geranylgeranyl)-sn-glycerol 1-phospholipid + 8 AH2. The enzyme catalyses 2,3-bis-O-(phytanyl)-sn-glycerol 1-phosphate + 8 A = 2,3-bis-O-(geranylgeranyl)-sn-glycerol 1-phosphate + 8 AH2. It carries out the reaction CDP-2,3-bis-O-(geranylgeranyl)-sn-glycerol + 8 AH2 = CDP-2,3-bis-O-(phytanyl)-sn-glycerol + 8 A. It catalyses the reaction archaetidylserine + 8 AH2 = 2,3-bis-O-phytanyl-sn-glycero-3-phospho-L-serine + 8 A. The protein operates within membrane lipid metabolism; glycerophospholipid metabolism. In terms of biological role, is involved in the reduction of 2,3-digeranylgeranylglycerophospholipids (unsaturated archaeols) into 2,3-diphytanylglycerophospholipids (saturated archaeols) in the biosynthesis of archaeal membrane lipids. Catalyzes the formation of archaetidic acid (2,3-di-O-phytanyl-sn-glyceryl phosphate) from 2,3-di-O-geranylgeranylglyceryl phosphate (DGGGP) via the hydrogenation of each double bond of the isoprenoid chains. Is also probably able to reduce double bonds of geranyl groups in CDP-2,3-bis-O-(geranylgeranyl)-sn-glycerol and archaetidylserine, thus acting at various stages in the biosynthesis of archaeal membrane lipids. This is Digeranylgeranylglycerophospholipid reductase 2 from Methanothermobacter thermautotrophicus (strain ATCC 29096 / DSM 1053 / JCM 10044 / NBRC 100330 / Delta H) (Methanobacterium thermoautotrophicum).